The sequence spans 63 residues: MAAATLTSKLYSLLFRRTSTFALTIIVGVMFFERAFDQGADAIYDHINEGKLWKHIKHKYENK.

The Mitochondrial matrix portion of the chain corresponds to 2–21; the sequence is AAATLTSKLYSLLFRRTSTF. The chain crosses the membrane as a helical span at residues 22–47; that stretch reads ALTIIVGVMFFERAFDQGADAIYDHI. At 48–63 the chain is on the mitochondrial intermembrane side; it reads NEGKLWKHIKHKYENK.

The protein belongs to the UQCR10/QCR9 family. As to quaternary structure, component of the ubiquinol-cytochrome c oxidoreductase (cytochrome b-c1 complex, complex III, CIII), a multisubunit enzyme composed of 11 subunits. The complex is composed of 3 respiratory subunits cytochrome b, cytochrome c1 and Rieske protein UQCRFS1, 2 core protein subunits UQCRC1/QCR1 and UQCRC2/QCR2, and 6 low-molecular weight protein subunits UQCRH/QCR6, UQCRB/QCR7, UQCRQ/QCR8, UQCR10/QCR9, UQCR11/QCR10 and subunit 9, the cleavage product of Rieske protein UQCRFS1. The complex exists as an obligatory dimer and forms supercomplexes (SCs) in the inner mitochondrial membrane with NADH-ubiquinone oxidoreductase (complex I, CI) and cytochrome c oxidase (complex IV, CIV), resulting in different assemblies (supercomplex SCI(1)III(2)IV(1) and megacomplex MCI(2)III(2)IV(2)). Interacts with STMP1.

The protein resides in the mitochondrion inner membrane. Functionally, component of the ubiquinol-cytochrome c oxidoreductase, a multisubunit transmembrane complex that is part of the mitochondrial electron transport chain which drives oxidative phosphorylation. The respiratory chain contains 3 multisubunit complexes succinate dehydrogenase (complex II, CII), ubiquinol-cytochrome c oxidoreductase (cytochrome b-c1 complex, complex III, CIII) and cytochrome c oxidase (complex IV, CIV), that cooperate to transfer electrons derived from NADH and succinate to molecular oxygen, creating an electrochemical gradient over the inner membrane that drives transmembrane transport and the ATP synthase. The cytochrome b-c1 complex catalyzes electron transfer from ubiquinol to cytochrome c, linking this redox reaction to translocation of protons across the mitochondrial inner membrane, with protons being carried across the membrane as hydrogens on the quinol. In the process called Q cycle, 2 protons are consumed from the matrix, 4 protons are released into the intermembrane space and 2 electrons are passed to cytochrome c. The protein is Cytochrome b-c1 complex subunit 9 (UQCR10) of Homo sapiens (Human).